Reading from the N-terminus, the 1885-residue chain is Chitin synthase 5 (1885 aa).

Residues 1-789 (MATRGNVPAH…SIALTGSQAA (789 aa)) form the Myosin motor domain. 99-106 (GESGSGKT) provides a ligand contact to ATP. 2 N-linked (GlcNAc...) asparagine glycosylation sites follow: Asn-219 and Asn-429. The segment at 601–649 (KPLRMPSVSRKKHDQLRRMASRRADRSPAPQEEEPLPGTEEAKVRRTKP) is disordered. The span at 609–621 (SRKKHDQLRRMAS) shows a compositional bias: basic residues. Positions 666-690 (LDNITKSLTAPNVNNYFVFCLKPND) are actin-binding. Asn-668 carries an N-linked (GlcNAc...) asparagine glycan. A disordered region spans residues 794–817 (GDIGSPSRPDTPGHNPFSDSKARL). The next 2 membrane-spanning stretches (helical) occupy residues 894–914 (WLAI…KWIG) and 929–949 (FAIN…IIVF). One can recognise a Cytochrome b5 heme-binding domain in the interval 957–1016 (QNVYSAAELSAHDGKGKHSAYVAIRGQVFDLGAFMPNHYPKIIPQSSLKKYAGVDATGLF). Residues Asn-1043 and Asn-1068 are each glycosylated (N-linked (GlcNAc...) asparagine). Residues 1205–1225 (ILLAVSILLCSVIGFKFFAAL) traverse the membrane as a helical segment. Asn-1462 and Asn-1568 each carry an N-linked (GlcNAc...) asparagine glycan. 3 helical membrane passes run 1599-1619 (LLST…IVLL), 1626-1646 (VPLT…IIFI), and 1653-1673 (MIGW…GLPL). Residues Asn-1759 and Asn-1790 are each glycosylated (N-linked (GlcNAc...) asparagine). Residues 1827-1882 (LPTDDMLLNEIRDILRTADLMTVTKKGIKQELERRFNVNLDMKRAYIGSATEAILS) form the DEK-C domain.

It in the N-terminal section; belongs to the TRAFAC class myosin-kinesin ATPase superfamily. Myosin family. In the C-terminal section; belongs to the chitin synthase family. Class V subfamily. Post-translationally, maximal activity requires trypsin activation, suggesting a zymogenic nature.

The protein localises to the cell membrane. The protein resides in the membrane. It catalyses the reaction [(1-&gt;4)-N-acetyl-beta-D-glucosaminyl](n) + UDP-N-acetyl-alpha-D-glucosamine = [(1-&gt;4)-N-acetyl-beta-D-glucosaminyl](n+1) + UDP + H(+). Functionally, polymerizes chitin, a structural polymer of the cell wall and septum, by transferring the sugar moiety of UDP-GlcNAc to the non-reducing end of the growing chitin polymer. CHS5 is required for the sustained growth at 37 degrees Celsius and is of critical importance for virulence. Especially important at infection temperatures for maintaining the cell wall integrity of developing yeast buds, elongating tips of hyphae, and random sites of expansion in sclerotic forms. This is Chitin synthase 5 from Exophiala dermatitidis (strain ATCC 34100 / CBS 525.76 / NIH/UT8656) (Black yeast).